The chain runs to 274 residues: Large ribosomal subunit protein uL2cz/uL2cy (274 aa).

Disordered regions lie at residues 1–20 (MAIHLYKTSTPSTRNGAVDS) and 223–274 (MNPV…RRSK).

This sequence belongs to the universal ribosomal protein uL2 family. In terms of assembly, part of the 50S ribosomal subunit.

It is found in the plastid. Its subcellular location is the chloroplast. This is Large ribosomal subunit protein uL2cz/uL2cy (rpl2-A) from Eucalyptus globulus subsp. globulus (Tasmanian blue gum).